A 425-amino-acid polypeptide reads, in one-letter code: MASSNLIKQLQERGLVAQVTDENALAERLAQGPIALYCGFDPTADSLHLGHLVPLLCLKRFQDAGHKPVALVGGATGLIGDPSFKAAERKLNTSETVNQWVEKIRQQVAPFLSFNCGDNSAIAANNYDWFGSMNVLTFLRDIGKHFSVNQMINKEAVKQRLNRDDQGISFTEFSYNLLQGYDFACLNERYGVALQIGGSDQWGNITSGIDLTRRLHQNQVFGLTVPLITKSDGTKFGKTEGGAVWLDAAKTSPYKFYQFWINTADADVYRFLKFFTFMSLEEINQLEEEDKSSGKAPRAQGVLAELVTRLVHGEEGLIAAQRITRSLFAGNVTELTANDLSQLAQDGMPGIELKIGQDLQQALVNAELAPSRGQARKLIEAKSVSINGSLQTDAEYTFGEDDRLFGQYTLLRRGKKNYSLISWQS.

Tyr-37 serves as a coordination point for L-tyrosine. The 'HIGH' region signature appears at 42-51; that stretch reads PTADSLHLGH. Tyr-175 and Gln-179 together coordinate L-tyrosine. The 'KMSKS' region signature appears at 235–239; the sequence is KFGKT. Lys-238 is an ATP binding site. Residues 357 to 415 enclose the S4 RNA-binding domain; the sequence is QDLQQALVNAELAPSRGQARKLIEAKSVSINGSLQTDAEYTFGEDDRLFGQYTLLRRGK.

This sequence belongs to the class-I aminoacyl-tRNA synthetase family. TyrS type 1 subfamily. Homodimer.

The protein localises to the cytoplasm. The catalysed reaction is tRNA(Tyr) + L-tyrosine + ATP = L-tyrosyl-tRNA(Tyr) + AMP + diphosphate + H(+). In terms of biological role, catalyzes the attachment of tyrosine to tRNA(Tyr) in a two-step reaction: tyrosine is first activated by ATP to form Tyr-AMP and then transferred to the acceptor end of tRNA(Tyr). The chain is Tyrosine--tRNA ligase from Erwinia tasmaniensis (strain DSM 17950 / CFBP 7177 / CIP 109463 / NCPPB 4357 / Et1/99).